A 601-amino-acid polypeptide reads, in one-letter code: Group B oligopeptidase PepB (601 aa).

H386 is a Zn(2+) binding site. The active site involves E387. Positions 390 and 393 each coordinate Zn(2+).

The protein belongs to the peptidase M3B family. It depends on Zn(2+) as a cofactor.

It is found in the cytoplasm. Has oligopeptidase activity and degrades a variety of small bioactive peptides, including bradykinin, neurotensin, and peptide fragments of substance P and adrenocorticotropin. Also hydrolyzes the synthetic collagen-like substrate N-(3-[2-furyl]acryloyl)-Leu-Gly-Pro-Ala (FALGPA). The polypeptide is Group B oligopeptidase PepB (pepB) (Streptococcus agalactiae serotype III (strain NEM316)).